Here is a 389-residue protein sequence, read N- to C-terminus: Cytochrome b (389 aa).

Helical transmembrane passes span 36 to 56 (MGSLLGLCLVIQICTGIFLAM), 80 to 102 (WLIRYMHANGASFFFMCMYTHIA), 117 to 137 (VWTVGVIIFVLTMAAAFLGYC), and 183 to 203 (FFAFHYLVPFIIAAVVIMHMM). Histidine 86 and histidine 100 together coordinate heme b. Positions 187 and 201 each coordinate heme b. A ubiquinone is bound at residue histidine 206. The next 4 helical transmembrane spans lie at 229-249 (FVFKDLITVFVFMILFSLFVF), 293-313 (LLGVITMFAAILVLLVLPITD), 325-345 (LSKFFFFIFVFNFVLLGIIGM), and 352-372 (FVLIGQISTGIYFAYFIIIVP).

Belongs to the cytochrome b family. Fungal cytochrome b-c1 complex contains 10 subunits; 3 respiratory subunits, 2 core proteins and 5 low-molecular weight proteins. Cytochrome b-c1 complex is a homodimer. Heme b is required as a cofactor.

It localises to the mitochondrion inner membrane. In terms of biological role, component of the ubiquinol-cytochrome c reductase complex (complex III or cytochrome b-c1 complex) that is part of the mitochondrial respiratory chain. The b-c1 complex mediates electron transfer from ubiquinol to cytochrome c. Contributes to the generation of a proton gradient across the mitochondrial membrane that is then used for ATP synthesis. In Vanderwaltozyma polyspora (strain ATCC 22028 / DSM 70294 / BCRC 21397 / CBS 2163 / NBRC 10782 / NRRL Y-8283 / UCD 57-17) (Kluyveromyces polysporus), this protein is Cytochrome b (COB).